The sequence spans 134 residues: Small ribosomal subunit protein uS11 (134 aa).

The protein belongs to the universal ribosomal protein uS11 family. As to quaternary structure, part of the 30S ribosomal subunit. Interacts with proteins S7 and S18. Binds to IF-3.

In terms of biological role, located on the platform of the 30S subunit, it bridges several disparate RNA helices of the 16S rRNA. Forms part of the Shine-Dalgarno cleft in the 70S ribosome. The sequence is that of Small ribosomal subunit protein uS11 from Albidiferax ferrireducens (strain ATCC BAA-621 / DSM 15236 / T118) (Rhodoferax ferrireducens).